A 590-amino-acid chain; its full sequence is Synaptotagmin-3 (590 aa).

Over 1–54 (MSGDYEDDLCRRALILVSDLCARVRDADTNDRCQEFNDRIRGYPRGPDADISVS) the chain is Vesicular. Residues 10–34 (CRRALILVSDLCARVRDADTNDRCQ) form a cysteine motif region. Residues 55–75 (LLSVIVTFCGIVLLGVSLFVS) form a helical membrane-spanning segment. At 76–590 (WKLCWVPWRD…KGLSEKENSE (515 aa)) the chain is on the cytoplasmic side. Disordered regions lie at residues 143 to 220 (AELL…VTSL), 234 to 260 (TQQTLTSQPDPSSEERPPALPLPLPGG), and 273 to 295 (ELYQGTGPGGRRSGGGPGSGEAG). Residues 185–203 (SPELPSEGGAGSGLLLLPP) are compositionally biased toward low complexity. A compositionally biased stretch (polar residues) spans 234–243 (TQQTLTSQPD). The span at 278–295 (TGPGGRRSGGGPGSGEAG) shows a compositional bias: gly residues. Arginine 284 carries the post-translational modification Omega-N-methylarginine. 2 C2 domains span residues 299 to 420 (PCGR…PLWR) and 431 to 565 (DLGE…EHWH). Residues aspartate 330, aspartate 336, aspartate 388, phenylalanine 389, aspartate 390, serine 393, aspartate 396, aspartate 462, aspartate 468, aspartate 522, and aspartate 524 each coordinate Ca(2+).

This sequence belongs to the synaptotagmin family. In terms of assembly, homodimer; disulfide-linked via the cysteine motif. Can also form heterodimers with SYT6, SYT9 and SYT10. The cofactor is Ca(2+). In terms of tissue distribution, expressed in melanocytes.

It is found in the cell membrane. Its subcellular location is the cytoplasmic vesicle. It localises to the secretory vesicle membrane. In terms of biological role, ca(2+) sensor involved in Ca(2+)-dependent exocytosis of secretory vesicles through Ca(2+) and phospholipid binding to the C2 domain. Ca(2+) induces binding of the C2-domains to phospholipid membranes and to assembled SNARE-complexes; both actions contribute to triggering exocytosis. Plays a role in dendrite formation by melanocytes. The protein is Synaptotagmin-3 (SYT3) of Homo sapiens (Human).